The sequence spans 291 residues: Ribose-phosphate pyrophosphokinase (291 aa).

ATP is bound by residues 34-36 (DGE) and 93-94 (RQ). 2 residues coordinate Mg(2+): His-127 and Asp-165. Residue Lys-188 is part of the active site. D-ribose 5-phosphate is bound by residues Arg-190, Asp-216, and 220-224 (STGGT).

This sequence belongs to the ribose-phosphate pyrophosphokinase family. Class III (archaeal) subfamily. It depends on Mg(2+) as a cofactor.

The protein localises to the cytoplasm. The catalysed reaction is D-ribose 5-phosphate + ATP = 5-phospho-alpha-D-ribose 1-diphosphate + AMP + H(+). It participates in metabolic intermediate biosynthesis; 5-phospho-alpha-D-ribose 1-diphosphate biosynthesis; 5-phospho-alpha-D-ribose 1-diphosphate from D-ribose 5-phosphate (route I): step 1/1. Involved in the biosynthesis of the central metabolite phospho-alpha-D-ribosyl-1-pyrophosphate (PRPP) via the transfer of pyrophosphoryl group from ATP to 1-hydroxyl of ribose-5-phosphate (Rib-5-P). The polypeptide is Ribose-phosphate pyrophosphokinase (Sulfurisphaera tokodaii (strain DSM 16993 / JCM 10545 / NBRC 100140 / 7) (Sulfolobus tokodaii)).